Reading from the N-terminus, the 114-residue chain is T cell receptor beta variable 6-1 (114 aa).

Residues M1 to A21 form the signal peptide. Residues G22–E114 form the Ig-like domain. C42 and C110 are oxidised to a cystine. Residue N84 is glycosylated (N-linked (GlcNAc...) asparagine).

In terms of assembly, alpha-beta TR is a heterodimer composed of an alpha and beta chain; disulfide-linked. The alpha-beta TR is associated with the transmembrane signaling CD3 coreceptor proteins to form the TR-CD3 (TcR or TCR). The assembly of alpha-beta TR heterodimers with CD3 occurs in the endoplasmic reticulum where a single alpha-beta TR heterodimer associates with one CD3D-CD3E heterodimer, one CD3G-CD3E heterodimer and one CD247 homodimer forming a stable octameric structure. CD3D-CD3E and CD3G-CD3E heterodimers preferentially associate with TR alpha and TR beta chains, respectively. The association of the CD247 homodimer is the last step of TcR assembly in the endoplasmic reticulum and is required for transport to the cell surface.

The protein localises to the cell membrane. In terms of biological role, v region of the variable domain of T cell receptor (TR) beta chain that participates in the antigen recognition. Alpha-beta T cell receptors are antigen specific receptors which are essential to the immune response and are present on the cell surface of T lymphocytes. Recognize peptide-major histocompatibility (MH) (pMH) complexes that are displayed by antigen presenting cells (APC), a prerequisite for efficient T cell adaptive immunity against pathogens. Binding of alpha-beta TR to pMH complex initiates TR-CD3 clustering on the cell surface and intracellular activation of LCK that phosphorylates the ITAM motifs of CD3G, CD3D, CD3E and CD247 enabling the recruitment of ZAP70. In turn ZAP70 phosphorylates LAT, which recruits numerous signaling molecules to form the LAT signalosome. The LAT signalosome propagates signal branching to three major signaling pathways, the calcium, the mitogen-activated protein kinase (MAPK) kinase and the nuclear factor NF-kappa-B (NF-kB) pathways, leading to the mobilization of transcription factors that are critical for gene expression and essential for T cell growth and differentiation. The T cell repertoire is generated in the thymus, by V-(D)-J rearrangement. This repertoire is then shaped by intrathymic selection events to generate a peripheral T cell pool of self-MH restricted, non-autoaggressive T cells. Post-thymic interaction of alpha-beta TR with the pMH complexes shapes TR structural and functional avidity. The chain is T cell receptor beta variable 6-1 from Homo sapiens (Human).